The sequence spans 138 residues: MRHGIAGRKLGVTSSHRQAMFRNMAVALIKHEQITTTLPKAKELRPVAEKLITLGKRGGLHARRQAYAQLRDEVIVTKLFSAIAERYKARQGGYTRVLKAGVRYGDAASMAVIELVDRDVSAKGQDSGPRPERDETEE.

This sequence belongs to the bacterial ribosomal protein bL17 family. Part of the 50S ribosomal subunit. Contacts protein L32.

This chain is Large ribosomal subunit protein bL17, found in Granulibacter bethesdensis (strain ATCC BAA-1260 / CGDNIH1).